The sequence spans 169 residues: 6,7-dimethyl-8-ribityllumazine synthase (169 aa).

Residues Trp-27, 61–63 (SYE), and 90–92 (VLI) each bind 5-amino-6-(D-ribitylamino)uracil. Residue 95 to 96 (ST) coordinates (2S)-2-hydroxy-3-oxobutyl phosphate. His-98 functions as the Proton donor in the catalytic mechanism. 5-amino-6-(D-ribitylamino)uracil is bound at residue Phe-123. Residue Arg-137 participates in (2S)-2-hydroxy-3-oxobutyl phosphate binding.

This sequence belongs to the DMRL synthase family. In terms of assembly, homopentamer.

The protein localises to the mitochondrion intermembrane space. It carries out the reaction (2S)-2-hydroxy-3-oxobutyl phosphate + 5-amino-6-(D-ribitylamino)uracil = 6,7-dimethyl-8-(1-D-ribityl)lumazine + phosphate + 2 H2O + H(+). It participates in cofactor biosynthesis; riboflavin biosynthesis; riboflavin from 2-hydroxy-3-oxobutyl phosphate and 5-amino-6-(D-ribitylamino)uracil: step 1/2. Functionally, catalyzes the formation of 6,7-dimethyl-8-ribityllumazine by condensation of 5-amino-6-(D-ribitylamino)uracil with 3,4-dihydroxy-2-butanone 4-phosphate. This is the penultimate step in the biosynthesis of riboflavin. This chain is 6,7-dimethyl-8-ribityllumazine synthase (RIB4), found in Saccharomyces cerevisiae (strain ATCC 204508 / S288c) (Baker's yeast).